Here is a 247-residue protein sequence, read N- to C-terminus: Ribosomal RNA large subunit methyltransferase E (247 aa).

S-adenosyl-L-methionine is bound by residues G99, W101, D123, D139, and D162. Residue K202 is the Proton acceptor of the active site.

The protein belongs to the class I-like SAM-binding methyltransferase superfamily. RNA methyltransferase RlmE family.

Its subcellular location is the cytoplasm. The catalysed reaction is uridine(2552) in 23S rRNA + S-adenosyl-L-methionine = 2'-O-methyluridine(2552) in 23S rRNA + S-adenosyl-L-homocysteine + H(+). Functionally, specifically methylates the uridine in position 2552 of 23S rRNA at the 2'-O position of the ribose in the fully assembled 50S ribosomal subunit. This Anaplasma phagocytophilum (strain HZ) protein is Ribosomal RNA large subunit methyltransferase E.